A 1152-amino-acid polypeptide reads, in one-letter code: MATLDNCTQVHHMFAYNREHGTNYTRNHFRRYLAAQRIGFYYDWDDDVYECPTCEAIYHSLDDIKNWHECDPPAFDLNDFITDARLKSAPVPDLGPVIIEIPKAEEKQELNFFAATPAPEVSQWKCRGLQFGSFTELETSEPVASAPEPKCEEPARTIAKPEESVEQETRGDGKRLLQAQMEVDKAEQDLAFACLNASLKPRLEGRTTATIARRRDGCLVYKTKPSWSQRRRAKKTLKVDTLACENPYIPAIVDKISIAGGSSASVMHEQQKPKTLHTTPSRKVATHYKRTVMNQQTLMAFINQVGTILLNAEKEFEVVGCRKQKVTGKGTRHNGVRLVKLKTAHEEGHRRRVDIRIPNGLRPIVMRISARGGWHRTWTDSELSPGSSGYVLNSSKIIGKFGLRRHSIFVVRGRVDGEVIDSQSKVTHSITHRMVQYSDVARNFWNGYSTCFMHNTPKDILHTCTSDFDVKECGTVAALLTQTLFQFGKITCEKCAIEYKNLTRDELATRVNKEIDGTIISIQTQHPRFVHVLNFLRLIKQVLNAKNGNFGAFQETERIIGDRMDAPFSHVNKLNAIVIKGNQATSDEMAQASNHVLEIARYLKNRTENIQKGSLKSFRNKISGKAHLNPSLMCDNQLDKNGGFEWGQRSYHAKRFFDGYFETIDPSDGYSKYTIRRNPNGHRKLAIGNLIVSTNFESHRRSMIGESIEDPGLTNQCVSKEGDTFIYPCCCVTDEYGKPTLSEIKMPTKHHLVLGNAGDPKYVDLPKEAEGKMFVTKDGYCYINIFLAMLVDVPEDQAKDFTKMAREIAVKQLGEWPSMMDVATACNILATFHPDTRRSELPRILVDHATKTFHVIDSYGSITTGFHILKANTVTQLVKFAHESLESEMQHYRVGGEPDKAPRKPAGSVPTLGISDLRDLGVELENEEHSIRPNLQRLIKAIYRPRMMRSLLTEEPYLLILSIVSPGVLMALYNSGSLERTMHEFLQTDQRLSATAQILKHLAKKVSLAKTLTIQNAILEGGAGSLNEILDAPAGRSLSYRLAKQTVEVMMARSDMDKELVDVGFSVLRDQKNELIEKKLSHGFGGFVARTTIVWKIISNASLAAMAGYFYSRSNPNRRRRFERQIQYLGWICFQKRDLAPKGNLLRRSKES.

The region spanning 292-437 (VMNQQTLMAF…HSITHRMVQY (146 aa)) is the Peptidase S30 domain. Catalysis depends on for P1 proteinase activity residues H345, D354, and S388. The short motif at 489 to 492 (KITC) is the Involved in interaction with stylet and aphid transmission element. The Involved in virions binding and aphid transmission signature appears at 747 to 749 (PTK). A Peptidase C6 domain is found at 773–895 (MFVTKDGYCY…ESEMQHYRVG (123 aa)). Residues C781 and H854 each act as for helper component proteinase activity in the active site.

It belongs to the potyviridae P3N-PIPO polyprotein family. In terms of assembly, interacts (via PIPO domain) with host PCaP1 protein; this interaction may help to anchor the movement complex to the plasma membrane from which the complex could move to the plasmodesmata. In terms of processing, potyviral RNA is expressed as two polyproteins which undergo post-translational proteolytic processing. Genome polyprotein is processed by NIa-pro, P1 and HC-pro proteinases resulting in the production of at least ten individual proteins. P3N-PIPO is cleaved by P1 and HC-pro proteinases resulting in the production of three individual proteins. The P1 proteinase and the HC-pro cleave only their respective C-termini autocatalytically.

It is found in the host cell junction. Its subcellular location is the host plasmodesma. The catalysed reaction is Hydrolyzes a Gly-|-Gly bond at its own C-terminus, commonly in the sequence -Tyr-Xaa-Val-Gly-|-Gly, in the processing of the potyviral polyprotein.. Required for aphid transmission and also has proteolytic activity. Only cleaves a Gly-Gly dipeptide at its own C-terminus. Interacts with virions and aphid stylets. Acts as a suppressor of RNA-mediated gene silencing, also known as post-transcriptional gene silencing (PTGS), a mechanism of plant viral defense that limits the accumulation of viral RNAs. May have RNA-binding activity. In terms of biological role, allows efficient cell to cell propagation, by bypassing the host cell wall barrier. Transports viral genome to neighboring plant cells directly through plasmosdesmata, without any budding. This Lettuce mosaic virus (strain 0 / isolate French) (LMV) protein is P3N-PIPO polyprotein.